A 1070-amino-acid polypeptide reads, in one-letter code: DNA-directed RNA polymerase subunit beta (1070 aa).

This sequence belongs to the RNA polymerase beta chain family. As to quaternary structure, in plastids the minimal PEP RNA polymerase catalytic core is composed of four subunits: alpha, beta, beta', and beta''. When a (nuclear-encoded) sigma factor is associated with the core the holoenzyme is formed, which can initiate transcription.

Its subcellular location is the plastid. The protein resides in the chloroplast. It catalyses the reaction RNA(n) + a ribonucleoside 5'-triphosphate = RNA(n+1) + diphosphate. DNA-dependent RNA polymerase catalyzes the transcription of DNA into RNA using the four ribonucleoside triphosphates as substrates. The chain is DNA-directed RNA polymerase subunit beta from Morus indica (Mulberry).